Consider the following 433-residue polypeptide: Xylose isomerase (433 aa).

Residues histidine 99 and aspartate 102 contribute to the active site. Glutamate 230, glutamate 266, histidine 269, aspartate 294, aspartate 305, aspartate 307, and aspartate 337 together coordinate Mg(2+).

It belongs to the xylose isomerase family. Homotetramer. It depends on Mg(2+) as a cofactor.

Its subcellular location is the cytoplasm. It catalyses the reaction alpha-D-xylose = alpha-D-xylulofuranose. The sequence is that of Xylose isomerase from Cereibacter sphaeroides (strain ATCC 17023 / DSM 158 / JCM 6121 / CCUG 31486 / LMG 2827 / NBRC 12203 / NCIMB 8253 / ATH 2.4.1.) (Rhodobacter sphaeroides).